Here is a 319-residue protein sequence, read N- to C-terminus: Adenosine receptor A3 (319 aa).

The Extracellular portion of the chain corresponds to 1-15; it reads MEADNTTETDWLNIT. N-linked (GlcNAc...) asparagine glycans are attached at residues Asn-5 and Asn-13. A helical membrane pass occupies residues 16–38; sequence YITMEAAIGLCAVVGNMLVIWVV. Topologically, residues 39–49 are cytoplasmic; that stretch reads KLNPTLRTTTV. The helical transmembrane segment at 50–73 threads the bilayer; sequence YFIVSLALADIAVGVLVIPLAIAV. The Extracellular segment spans residues 74–85; that stretch reads SLQVKMHFYACL. The cysteines at positions 84 and 167 are disulfide-linked. The helical transmembrane segment at 86–107 threads the bilayer; the sequence is FMSCVLLIFTHASIMSLLAIAV. Topologically, residues 108–127 are cytoplasmic; sequence HRYLRVKLTVRYRTVTTQRR. The helical transmembrane segment at 128 to 149 threads the bilayer; the sequence is IWLFLGLCWLVSFLVGLTPMFG. Residues 150–178 are Extracellular-facing; that stretch reads WNRKATLASSQNSSTLLCHFRSVVSLDYM. A glycan (N-linked (GlcNAc...) asparagine) is linked at Asn-161. Residues 179-199 traverse the membrane as a helical segment; the sequence is VFFSFITWILVPLVVMCIIYL. Topologically, residues 200–232 are cytoplasmic; it reads DIFYIIRNKLSQNLTGFRETRAFYGREFKTAKS. The helical transmembrane segment at 233–256 threads the bilayer; the sequence is LFLVLFLFALCWLPLSIINFVSYF. The Extracellular portion of the chain corresponds to 257-262; it reads DVKIPD. The helical transmembrane segment at 263-285 threads the bilayer; sequence VAMCLGILLSHANSMMNPIVYAC. Over 286 to 319 the chain is Cytoplasmic; sequence KIKKFKETYFLILRAVRLCQTSDSLDSNMEQTTE. Residue Cys-304 is the site of S-palmitoyl cysteine attachment.

The protein belongs to the G-protein coupled receptor 1 family. In terms of processing, phosphorylation on Thr-317 and Thr-318 may be crucial for rapid desensitization. Phosphorylation on Thr-317 may be necessary for phosphorylation on Thr-318 to occur.

The protein resides in the cell membrane. Its function is as follows. Receptor for adenosine. The activity of this receptor is mediated by G proteins which inhibits adenylyl cyclase. The chain is Adenosine receptor A3 (Adora3) from Mus musculus (Mouse).